A 159-amino-acid polypeptide reads, in one-letter code: Crossover junction endodeoxyribonuclease RuvC (159 aa).

Catalysis depends on residues Asp7, Glu67, and Asp139. Mg(2+)-binding residues include Asp7, Glu67, and Asp139.

The protein belongs to the RuvC family. Homodimer which binds Holliday junction (HJ) DNA. The HJ becomes 2-fold symmetrical on binding to RuvC with unstacked arms; it has a different conformation from HJ DNA in complex with RuvA. In the full resolvosome a probable DNA-RuvA(4)-RuvB(12)-RuvC(2) complex forms which resolves the HJ. Mg(2+) is required as a cofactor.

Its subcellular location is the cytoplasm. The enzyme catalyses Endonucleolytic cleavage at a junction such as a reciprocal single-stranded crossover between two homologous DNA duplexes (Holliday junction).. The RuvA-RuvB-RuvC complex processes Holliday junction (HJ) DNA during genetic recombination and DNA repair. Endonuclease that resolves HJ intermediates. Cleaves cruciform DNA by making single-stranded nicks across the HJ at symmetrical positions within the homologous arms, yielding a 5'-phosphate and a 3'-hydroxyl group; requires a central core of homology in the junction. The consensus cleavage sequence is 5'-(A/T)TT(C/G)-3'. Cleavage occurs on the 3'-side of the TT dinucleotide at the point of strand exchange. HJ branch migration catalyzed by RuvA-RuvB allows RuvC to scan DNA until it finds its consensus sequence, where it cleaves and resolves the cruciform DNA. This Orientia tsutsugamushi (strain Ikeda) (Rickettsia tsutsugamushi) protein is Crossover junction endodeoxyribonuclease RuvC.